We begin with the raw amino-acid sequence, 426 residues long: Cytochrome c biogenesis protein CcsB (426 aa).

3 consecutive transmembrane segments (helical) span residues 14–34 (LKIA…GTLI), 72–92 (SFWF…CSFR), and 162–182 (LGPI…TYGS).

This sequence belongs to the Ccs1/CcsB family. In terms of assembly, may interact with CcsA.

It localises to the cellular thylakoid membrane. Its function is as follows. Required during biogenesis of c-type cytochromes (cytochrome c6 and cytochrome f) at the step of heme attachment. This is Cytochrome c biogenesis protein CcsB from Prochlorococcus marinus (strain NATL2A).